Reading from the N-terminus, the 845-residue chain is AdoMet-dependent rRNA methyltransferase SPB1 (845 aa).

Gly-58, Trp-60, Asp-78, Asp-94, and Asp-119 together coordinate S-adenosyl-L-methionine. Residue Lys-159 is the Proton acceptor of the active site. Disordered stretches follow at residues 223–247 and 279–298; these read GGGN…SQRQ and SLNK…DDDH. Coiled-coil stretches lie at residues 366–402 and 464–502; these read TEEQ…KEII and DEEE…ERDA. The span at 496–512 shows a compositional bias: basic and acidic residues; it reads RKAERDANYRAKQARGD. Disordered stretches follow at residues 496 to 546, 587 to 660, and 788 to 821; these read RKAE…DDDE, ENKT…HQQK, and KLNK…VKGK. Composition is skewed to acidic residues over residues 513–528, 536–545, 610–624, and 633–648; these read ADDE…NDDV, MESESDDDDD, NEND…ESDF, and DDDD…DDEV. A coiled-coil region spans residues 739–796; it reads IKKVLEAQSRKKLRALKRLEKIKKKSDLINEDSGKSERDKADEISKLMKKLNKKQKQK. The span at 788–797 shows a compositional bias: basic residues; that stretch reads KLNKKQKQKP.

It belongs to the class I-like SAM-binding methyltransferase superfamily. RNA methyltransferase RlmE family. SPB1 subfamily. In terms of assembly, component of the nucleolar and nucleoplasmic pre-60S ribosomal particle.

It localises to the nucleus. Its subcellular location is the nucleolus. The enzyme catalyses a ribonucleotide in rRNA + S-adenosyl-L-methionine = a 2'-O-methylribonucleotide in rRNA + S-adenosyl-L-homocysteine + H(+). Required for proper assembly of pre-ribosomal particles during the biogenesis of the 60S ribosomal subunit. In Candida albicans (strain SC5314 / ATCC MYA-2876) (Yeast), this protein is AdoMet-dependent rRNA methyltransferase SPB1.